The following is a 219-amino-acid chain: MGHPHPHPYAPAELHLPGFVPLQLSQAQILVPYLATSLFLLLAVWLISGRCSRRLSDTDRWLMCWWAFTGLTHIIIEGTFVFAPNFFSNQNPSYFDEVWKEYSKGDSRYVARDPATVTVEGITAVLEGPASLLAVYAIASGKSYSHILQFTVCLGQLYGCLVYFITAYLDGFNFWTSPFYFWAYFIGANSSWVVIPTMIAIRSWKKICAAFQGEKVKTK.

The next 4 membrane-spanning stretches (helical) occupy residues 29-49 (ILVPYLATSLFLLLAVWLISG), 62-82 (LMCWWAFTGLTHIIIEGTFVF), 119-139 (VEGITAVLEGPASLLAVYAIA), and 181-201 (FWAYFIGANSSWVVIPTMIAI). One can recognise an EXPERA domain in the interval 58–200 (TDRWLMCWWA…SWVVIPTMIA (143 aa)).

Belongs to the EBP family.

It is found in the endoplasmic reticulum membrane. The catalysed reaction is lathosterol = 5alpha-cholest-8-en-3beta-ol. It participates in steroid biosynthesis; sterol biosynthesis. In terms of biological role, catalyzes the conversion of Delta(8)-sterols to their corresponding Delta(7)-isomers. The sequence is that of Probable 3-beta-hydroxysteroid-Delta(8),Delta(7)-isomerase from Oryza sativa subsp. japonica (Rice).